The chain runs to 267 residues: Hydroxyethylthiazole kinase 2 (267 aa).

Residue methionine 41 participates in substrate binding. Residues lysine 116 and threonine 166 each contribute to the ATP site. Glycine 193 serves as a coordination point for substrate.

The protein belongs to the Thz kinase family. It depends on Mg(2+) as a cofactor.

The enzyme catalyses 5-(2-hydroxyethyl)-4-methylthiazole + ATP = 4-methyl-5-(2-phosphooxyethyl)-thiazole + ADP + H(+). It participates in cofactor biosynthesis; thiamine diphosphate biosynthesis; 4-methyl-5-(2-phosphoethyl)-thiazole from 5-(2-hydroxyethyl)-4-methylthiazole: step 1/1. Catalyzes the phosphorylation of the hydroxyl group of 4-methyl-5-beta-hydroxyethylthiazole (THZ). The chain is Hydroxyethylthiazole kinase 2 from Streptococcus pneumoniae (strain JJA).